Consider the following 73-residue polypeptide: Beta-defensin 10 (73 aa).

The signal sequence occupies residues 1–23 (MRTLCSLLLICCLLFSYTTPAVG). Cystine bridges form between C37–C66, C44–C59, and C49–C67.

It belongs to the beta-defensin family. Expressed in both adult and neonate brain, and very weakly in kidneys, epididymis, and testis.

The protein localises to the secreted. Its function is as follows. Has antibacterial activity. This Mus musculus (Mouse) protein is Beta-defensin 10 (Defb10).